Here is a 190-residue protein sequence, read N- to C-terminus: Xanthine phosphoribosyltransferase 1 (190 aa).

Residues Leu20 and Asn27 each coordinate xanthine. 129–133 (AQGCA) lines the 5-phospho-alpha-D-ribose 1-diphosphate pocket. Lys157 contacts xanthine.

It belongs to the purine/pyrimidine phosphoribosyltransferase family. Xpt subfamily. In terms of assembly, homodimer.

Its subcellular location is the cytoplasm. It catalyses the reaction XMP + diphosphate = xanthine + 5-phospho-alpha-D-ribose 1-diphosphate. Its pathway is purine metabolism; XMP biosynthesis via salvage pathway; XMP from xanthine: step 1/1. Its function is as follows. Converts the preformed base xanthine, a product of nucleic acid breakdown, to xanthosine 5'-monophosphate (XMP), so it can be reused for RNA or DNA synthesis. The polypeptide is Xanthine phosphoribosyltransferase 1 (Clostridium perfringens (strain ATCC 13124 / DSM 756 / JCM 1290 / NCIMB 6125 / NCTC 8237 / Type A)).